A 348-amino-acid chain; its full sequence is Rhodopsin (348 aa).

Residues threonine 1–alanine 33 are Extracellular-facing. Asparagine 12 carries N-linked (GlcNAc...) asparagine glycosylation. The chain crosses the membrane as a helical span at residues tyrosine 34–valine 58. Over threonine 59–asparagine 70 the chain is Cytoplasmic. A helical transmembrane segment spans residues tyrosine 71 to tyrosine 93. Residues serine 94–cysteine 107 lie on the Extracellular side of the membrane. The cysteines at positions 107 and 184 are disulfide-linked. The helical transmembrane segment at asparagine 108 to isoleucine 130 threads the bilayer. The 'Ionic lock' involved in activated form stabilization motif lies at glutamate 131 to tryptophan 133. Topologically, residues glutamate 131–histidine 149 are cytoplasmic. Residues alanine 150–valine 170 traverse the membrane as a helical segment. The Extracellular segment spans residues glycine 171–serine 199. N-linked (GlcNAc...) asparagine glycosylation is present at asparagine 197. A helical transmembrane segment spans residues phenylalanine 200–glycine 221. Residues arginine 222–arginine 249 are Cytoplasmic-facing. Residues methionine 250 to phenylalanine 271 traverse the membrane as a helical segment. At isoleucine 272–leucine 283 the chain is on the extracellular side. A helical membrane pass occupies residues phenylalanine 284–cysteine 305. Residue lysine 293 is modified to N6-(retinylidene)lysine. The Cytoplasmic portion of the chain corresponds to methionine 306 to alanine 348. The S-palmitoyl cysteine moiety is linked to residue cysteine 320. The segment at glycine 327 to alanine 348 is disordered. Low complexity predominate over residues alanine 332–alanine 348.

The protein belongs to the G-protein coupled receptor 1 family. Opsin subfamily. Phosphorylated on some or all of the serine and threonine residues present in the C-terminal region. In terms of processing, contains one covalently linked retinal chromophore.

It is found in the membrane. The protein resides in the cell projection. The protein localises to the cilium. Its subcellular location is the photoreceptor outer segment. In terms of biological role, photoreceptor required for image-forming vision at low light intensity. While most salt water fish species use retinal as chromophore, most freshwater fish use 3-dehydroretinal, or a mixture of retinal and 3-dehydroretinal. Light-induced isomerization of 11-cis to all-trans retinal triggers a conformational change that activates signaling via G-proteins. Subsequent receptor phosphorylation mediates displacement of the bound G-protein alpha subunit by arrestin and terminates signaling. This is Rhodopsin (rho) from Sargocentron punctatissimum (Speckled squirrelfish).